Here is a 451-residue protein sequence, read N- to C-terminus: tRNA-2-methylthio-N(6)-dimethylallyladenosine synthase (451 aa).

The MTTase N-terminal domain occupies 5–121 (RQYHITTFGC…LQDLLEQVEG (117 aa)). The [4Fe-4S] cluster site is built by Cys-14, Cys-50, Cys-84, Cys-156, Cys-160, and Cys-163. In terms of domain architecture, Radical SAM core spans 142 to 379 (RDSTVTAWVN…NHLVAQKAAE (238 aa)). The 65-residue stretch at 382–446 (QRYAGRIEEV…AFSLTGEAVE (65 aa)) folds into the TRAM domain.

It belongs to the methylthiotransferase family. MiaB subfamily. As to quaternary structure, monomer. [4Fe-4S] cluster is required as a cofactor.

The protein resides in the cytoplasm. It catalyses the reaction N(6)-dimethylallyladenosine(37) in tRNA + (sulfur carrier)-SH + AH2 + 2 S-adenosyl-L-methionine = 2-methylsulfanyl-N(6)-dimethylallyladenosine(37) in tRNA + (sulfur carrier)-H + 5'-deoxyadenosine + L-methionine + A + S-adenosyl-L-homocysteine + 2 H(+). In terms of biological role, catalyzes the methylthiolation of N6-(dimethylallyl)adenosine (i(6)A), leading to the formation of 2-methylthio-N6-(dimethylallyl)adenosine (ms(2)i(6)A) at position 37 in tRNAs that read codons beginning with uridine. The protein is tRNA-2-methylthio-N(6)-dimethylallyladenosine synthase of Picosynechococcus sp. (strain ATCC 27264 / PCC 7002 / PR-6) (Agmenellum quadruplicatum).